We begin with the raw amino-acid sequence, 392 residues long: 8-amino-7-oxononanoate synthase (392 aa).

Arginine 26 contacts substrate. 112–113 provides a ligand contact to pyridoxal 5'-phosphate; sequence GF. Residue histidine 137 participates in substrate binding. Residues serine 187, histidine 215, and threonine 241 each contribute to the pyridoxal 5'-phosphate site. Lysine 244 carries the N6-(pyridoxal phosphate)lysine modification. A substrate-binding site is contributed by threonine 357.

Belongs to the class-II pyridoxal-phosphate-dependent aminotransferase family. BioF subfamily. In terms of assembly, homodimer. The cofactor is pyridoxal 5'-phosphate.

It carries out the reaction 6-carboxyhexanoyl-[ACP] + L-alanine + H(+) = (8S)-8-amino-7-oxononanoate + holo-[ACP] + CO2. Its pathway is cofactor biosynthesis; biotin biosynthesis. Catalyzes the decarboxylative condensation of pimeloyl-[acyl-carrier protein] and L-alanine to produce 8-amino-7-oxononanoate (AON), [acyl-carrier protein], and carbon dioxide. In Photobacterium profundum (strain SS9), this protein is 8-amino-7-oxononanoate synthase.